Consider the following 263-residue polypeptide: Glucosamine-6-phosphate deaminase (263 aa).

Catalysis depends on Asp-67, which acts as the Proton acceptor; for enolization step. Asn-136 (for ring-opening step) is an active-site residue. The Proton acceptor; for ring-opening step role is filled by His-138. Glu-143 acts as the For ring-opening step in catalysis.

Belongs to the glucosamine/galactosamine-6-phosphate isomerase family. NagB subfamily. In terms of assembly, homohexamer.

It catalyses the reaction alpha-D-glucosamine 6-phosphate + H2O = beta-D-fructose 6-phosphate + NH4(+). It functions in the pathway amino-sugar metabolism; N-acetylneuraminate degradation; D-fructose 6-phosphate from N-acetylneuraminate: step 5/5. Its function is as follows. Catalyzes the reversible isomerization-deamination of glucosamine 6-phosphate (GlcN6P) to form fructose 6-phosphate (Fru6P) and ammonium ion. The sequence is that of Glucosamine-6-phosphate deaminase from Cellvibrio japonicus (strain Ueda107) (Pseudomonas fluorescens subsp. cellulosa).